The sequence spans 182 residues: MSMKGKETMSNEKIVVGKFGATYGIRGWLKVFSYTDNAESIFDYSPWFINQKGTWVEYKVESWKRHNKGMVAKLEGLDIREDAHLLTNFEIAIDPAVLPELSEDEFYWRELFGMQVVTTKGYDLGVVSDILETGSNDVLVVKANLKDAFGQKERLIPFLEEQVIIKVDREAQRIEVDWDPGF.

Residues 103 to 182 enclose the PRC barrel domain; sequence EDEFYWRELF…RIEVDWDPGF (80 aa).

The protein belongs to the RimM family. Binds ribosomal protein uS19.

Its subcellular location is the cytoplasm. An accessory protein needed during the final step in the assembly of 30S ribosomal subunit, possibly for assembly of the head region. Essential for efficient processing of 16S rRNA. May be needed both before and after RbfA during the maturation of 16S rRNA. It has affinity for free ribosomal 30S subunits but not for 70S ribosomes. This is Ribosome maturation factor RimM from Vibrio campbellii (strain ATCC BAA-1116).